The following is a 141-amino-acid chain: Hemoglobin subunit alpha-D (141 aa).

Positions 1–141 constitute a Globin domain; it reads MLTEDDKQLI…VSAVLAEKYR (141 aa). Heme b is bound by residues histidine 58 and histidine 87.

The protein belongs to the globin family. As to quaternary structure, heterotetramer of two alpha-D chains and two beta chains. Red blood cells.

Involved in oxygen transport from the lung to the various peripheral tissues. The polypeptide is Hemoglobin subunit alpha-D (HBAD) (Chelonoidis niger (Galapagos giant tortoise)).